Here is a 755-residue protein sequence, read N- to C-terminus: Kelch-like protein 5 (755 aa).

Residues 152–184 are disordered; the sequence is LDRPEVDDGTSEEENESDSSSCRTSNSSQTLSS. A compositionally biased stretch (acidic residues) spans 158–168; it reads DDGTSEEENES. Over residues 169–184 the composition is skewed to low complexity; it reads DSSSCRTSNSSQTLSS. In terms of domain architecture, BTB spans 220-287; it reads CDVILVAGDR…AYTGRLELKE (68 aa). Kelch repeat units lie at residues 468–514, 515–561, 563–608, 609–655, 657–708, and 709–754; these read TLFA…VLDD, KLYV…VLEG, MYAV…VLSG, KLYA…TWNG, LYAI…LLGD, and KLYA…VTVK.

In terms of tissue distribution, expressed in adrenal gland, ovary and thyroid gland and less abundantly in lymph node, prostate, spinal cord, testis and trachea.

Its subcellular location is the cytoplasm. The protein resides in the cytoskeleton. This Homo sapiens (Human) protein is Kelch-like protein 5 (KLHL5).